Consider the following 218-residue polypeptide: DNA-directed RNA polymerase III subunit RPC7-like (218 aa).

The interval 130 to 218 (TIILPKRPPK…SDDNMDEAIY (89 aa)) is disordered. Over residues 139–160 (KSTDDKEETIQKLETLEKKEEE) the composition is skewed to basic and acidic residues. 2 stretches are compositionally biased toward acidic residues: residues 161–193 (VTSEEDEEKEEEEEKEEGEEEEYDEEEHEEETD) and 201–218 (NGEDFGGDSDDNMDEAIY).

Belongs to the eukaryotic RPC7 RNA polymerase subunit family. Component of the RNA polymerase III (Pol III) complex consisting of 17 subunits. Pol III exists as two alternative complexes defined by the mutually exclusive incorporation of subunit POLR3G/RPC7alpha or POLR3GL/RPC7beta. Found in a trimeric complex with POLR3C/RPC3 and POLR3F/RPC6. Directly interacts with POLR3C. Expressed in the liver.

The protein localises to the nucleus. Functionally, DNA-dependent RNA polymerase catalyzes the transcription of DNA into RNA using the four ribonucleoside triphosphates as substrates. Specific peripheric component of RNA polymerase III which synthesizes small RNAs, such as 5S rRNA and tRNAs. The polypeptide is DNA-directed RNA polymerase III subunit RPC7-like (Mus musculus (Mouse)).